The sequence spans 482 residues: Catalase (482 aa).

Residues His53 and Asn126 contribute to the active site. Tyr336 provides a ligand contact to heme.

The protein belongs to the catalase family. Heme serves as cofactor.

Its subcellular location is the periplasm. It catalyses the reaction 2 H2O2 = O2 + 2 H2O. Decomposes hydrogen peroxide into water and oxygen; serves to protect cells from the toxic effects of hydrogen peroxide. Could protect cells in nodules which have a high potential to produce hydrogen peroxide because of the strong reducing conditions required for nitrogen fixation and the action of several proteins. The protein is Catalase (katA) of Aliivibrio fischeri (strain ATCC 700601 / ES114) (Vibrio fischeri).